Here is a 339-residue protein sequence, read N- to C-terminus: GTPase Era (339 aa).

The 45-residue stretch at 4–48 (RHLAKFAYREEFKGDTEALAAAVREDASTGSTSQLPLEVQFGKMS) folds into the RPE1 insert domain. The Era-type G domain occupies 51–220 (KTVSVCIIGR…ITSKAKISPW (170 aa)). Positions 59-66 (GRPNSGKS) are G1. 59-66 (GRPNSGKS) lines the GTP pocket. The tract at residues 85-89 (QTTRS) is G2. The tract at residues 106 to 109 (DTPG) is G3. Residues 106-110 (DTPGI) and 168-171 (NKID) contribute to the GTP site. The tract at residues 168–171 (NKID) is G4. A G5 region spans residues 196–198 (ISA). In terms of domain architecture, KH type-2 spans 248–325 (LQKELPYKLT…HLFLFVKVRE (78 aa)).

The protein belongs to the TRAFAC class TrmE-Era-EngA-EngB-Septin-like GTPase superfamily. Era GTPase family. As to quaternary structure, monomer.

The protein localises to the cytoplasm. Its subcellular location is the cell inner membrane. Functionally, an essential GTPase that binds both GDP and GTP, with rapid nucleotide exchange. Plays a role in 16S rRNA processing and 30S ribosomal subunit biogenesis and possibly also in cell cycle regulation and energy metabolism. This chain is GTPase Era, found in Rickettsia conorii (strain ATCC VR-613 / Malish 7).